Here is a 64-residue protein sequence, read N- to C-terminus: DNA-binding protein 7a (64 aa).

The protein belongs to the 7 kDa DNA-binding/endoribonuclease P2 family. As to quaternary structure, monomer.

Its subcellular location is the cytoplasm. Functionally, can constrain negative DNA supercoils. May be involved in maintaining the integrity of the genome at high temperature. This chain is DNA-binding protein 7a, found in Saccharolobus islandicus (strain L.D.8.5 / Lassen #2) (Sulfolobus islandicus).